Reading from the N-terminus, the 421-residue chain is Serine hydroxymethyltransferase (421 aa).

(6S)-5,6,7,8-tetrahydrofolate-binding positions include Leu-121 and 125 to 127; that span reads GHL. N6-(pyridoxal phosphate)lysine is present on Lys-229.

It belongs to the SHMT family. Homodimer. Pyridoxal 5'-phosphate serves as cofactor.

It is found in the cytoplasm. The catalysed reaction is (6R)-5,10-methylene-5,6,7,8-tetrahydrofolate + glycine + H2O = (6S)-5,6,7,8-tetrahydrofolate + L-serine. It functions in the pathway one-carbon metabolism; tetrahydrofolate interconversion. It participates in amino-acid biosynthesis; glycine biosynthesis; glycine from L-serine: step 1/1. Its function is as follows. Catalyzes the reversible interconversion of serine and glycine with tetrahydrofolate (THF) serving as the one-carbon carrier. This reaction serves as the major source of one-carbon groups required for the biosynthesis of purines, thymidylate, methionine, and other important biomolecules. Also exhibits THF-independent aldolase activity toward beta-hydroxyamino acids, producing glycine and aldehydes, via a retro-aldol mechanism. This is Serine hydroxymethyltransferase from Haemophilus influenzae (strain PittEE).